Reading from the N-terminus, the 552-residue chain is MKKNRERFCNREREFVYKFKVGSQCLELRVPLKFPVQENASHLHGRLMLLHSLPCFIEKDLKEALTQFIEEESLSDYDRDAEASLAAVKSGEVDLHQLASTWAKAYAETTLEHARPEEPSWDEDFADVYHDLIHSPASETLLNLEHNYFVSISELIGERDVELKKLRERQGIEMEKVMQELGKSLTDQDVNSLAAQHFESQQDLENKWSNELKQSTAIQKQEYQEWVIKLHQDLKNPNNSSLSEEIKVQPSQFRESVEAIGRIYEEQRKLEESFTIHLGAQLKTMHNLRLLRADMLDFCKHKRNHRSGVKLHRLQTALSLYSTSLCGLVLLVDNRINSYSGIKRDFATVCQECTDFHFPRIEEQLEVVQQVVLYARTQRRSKLKESLDSGNQNGGNDDKTKNAERNYLNVLPGEFYITRHSNLSEIHVAFHLCVDDHVKSGNITARDPAIMGLRNILKVCCTHDITTISIPLLLVHDMSEEMTIPWCLRRAELVFKCVKGFMMEMASWDGGISRTVQFLVPQSISEEMFYQLSNMLPQIFRVSSTLTLTSKH.

Positions L383–A403 are disordered.

In terms of assembly, component of the FERRY complex composed of five subunits, TBCK, PPP1R21, FERRY3, CRYZL1 and GATD1 with a ratio of 1:2:1:2:4, respectively.

It localises to the cytoplasm. The protein localises to the early endosome. Its function is as follows. Component of the FERRY complex (Five-subunit Endosomal Rab5 and RNA/ribosome intermediary). The FERRY complex directly interacts with mRNAs and RAB5A, and functions as a RAB5A effector involved in the localization and the distribution of specific mRNAs most likely by mediating their endosomal transport. The complex recruits mRNAs and ribosomes to early endosomes through direct mRNA-interaction. Plays a role in mast cell degranulation. The protein is Ferry endosomal RAB5 effector complex subunit 3 of Homo sapiens (Human).